A 157-amino-acid polypeptide reads, in one-letter code: Transcription elongation factor GreA (157 aa).

This sequence belongs to the GreA/GreB family.

Necessary for efficient RNA polymerase transcription elongation past template-encoded arresting sites. The arresting sites in DNA have the property of trapping a certain fraction of elongating RNA polymerases that pass through, resulting in locked ternary complexes. Cleavage of the nascent transcript by cleavage factors such as GreA or GreB allows the resumption of elongation from the new 3'terminus. GreA releases sequences of 2 to 3 nucleotides. This Brucella anthropi (strain ATCC 49188 / DSM 6882 / CCUG 24695 / JCM 21032 / LMG 3331 / NBRC 15819 / NCTC 12168 / Alc 37) (Ochrobactrum anthropi) protein is Transcription elongation factor GreA.